Here is a 326-residue protein sequence, read N- to C-terminus: Cyclin-dependent kinase 6 (326 aa).

Position 1 is an N-acetylmethionine (methionine 1). Tyrosine 13 and tyrosine 24 each carry phosphotyrosine. One can recognise a Protein kinase domain in the interval 13 to 300 (YECVAEIGEG…AYSALSHPYF (288 aa)). Residues 19 to 27 (IGEGAYGKV) and lysine 43 each bind ATP. 2 positions are modified to phosphothreonine: threonine 49 and threonine 70. Aspartate 145 acts as the Proton acceptor in catalysis. Position 177 is a phosphothreonine (threonine 177). Lysine 264 bears the N6-acetyllysine mark. Threonine 325 carries the post-translational modification Phosphothreonine.

Belongs to the protein kinase superfamily. CMGC Ser/Thr protein kinase family. CDC2/CDKX subfamily. In terms of assembly, interaction with D-type G1 cyclins. Cyclin binding promotes enzyme activation by phosphorylation at Thr-177. Binds to RUNX1, CDKN2D, FBXO7 and CDKN2C/p18-INK4c. Forms a cytoplasmic complex with Hsp90/HSP90AB1 and CDC37. FBXO7-binding promotes D-type cyclin binding. Interacts with Kaposi's sarcoma herpesvirus (KSHV) V-cyclin and herpesvirus saimiri (V-cyclin/ECLF2); the CDK6/V-cyclin complex phosphorylates NPM1 and thus lead to viral reactivation by reducing viral LANA levels. Thr-177 phosphorylation and Tyr-24 dephosphorylation promotes kinase activity. In terms of tissue distribution, expressed ubiquitously. Accumulates in squamous cell carcinomas, proliferating hematopoietic progenitor cells, beta-cells of pancreatic islets of Langerhans, and neuroblastomas. Reduced levels in differentiating cells.

It localises to the cytoplasm. The protein resides in the nucleus. It is found in the cell projection. Its subcellular location is the ruffle. The protein localises to the cytoskeleton. It localises to the microtubule organizing center. The protein resides in the centrosome. It catalyses the reaction L-seryl-[protein] + ATP = O-phospho-L-seryl-[protein] + ADP + H(+). It carries out the reaction L-threonyl-[protein] + ATP = O-phospho-L-threonyl-[protein] + ADP + H(+). Its activity is regulated as follows. Inhibited by INK4 proteins (CDKN2C/p18-INK4c), aminopurvalanol, PD0332991, 4-(Pyrazol-4-yl)-pyrimidines and fisetin, a flavonol inhibitor. Activated by Thr-177 phosphorylation and Tyr-24 dephosphorylation. Stimulated by cyclin from herpesvirus saimiri (V-cyclin/ECLF2). Rapidly down-regulated prior to cell differentiation (e.g. erythroid and osteoblast). Serine/threonine-protein kinase involved in the control of the cell cycle and differentiation; promotes G1/S transition. Phosphorylates pRB/RB1 and NPM1. Interacts with D-type G1 cyclins during interphase at G1 to form a pRB/RB1 kinase and controls the entrance into the cell cycle. Involved in initiation and maintenance of cell cycle exit during cell differentiation; prevents cell proliferation and negatively regulates cell differentiation, but is required for the proliferation of specific cell types (e.g. erythroid and hematopoietic cells). Essential for cell proliferation within the dentate gyrus of the hippocampus and the subventricular zone of the lateral ventricles. Required during thymocyte development. Promotes the production of newborn neurons, probably by modulating G1 length. Promotes, at least in astrocytes, changes in patterns of gene expression, changes in the actin cytoskeleton including loss of stress fibers, and enhanced motility during cell differentiation. Prevents myeloid differentiation by interfering with RUNX1 and reducing its transcription transactivation activity, but promotes proliferation of normal myeloid progenitors. Delays senescence. Promotes the proliferation of beta-cells in pancreatic islets of Langerhans. May play a role in the centrosome organization during the cell cycle phases. This Homo sapiens (Human) protein is Cyclin-dependent kinase 6 (CDK6).